A 73-amino-acid chain; its full sequence is Small ribosomal subunit protein eS27 (73 aa).

The Zn(2+) site is built by C28, C31, C47, and C50. The C4-type zinc-finger motif lies at 28-50; it reads CVDCGNEQIIFGNASTEVKCHIC.

Belongs to the eukaryotic ribosomal protein eS27 family. As to quaternary structure, part of the 30S ribosomal subunit. Zn(2+) is required as a cofactor.

This Methanopyrus kandleri (strain AV19 / DSM 6324 / JCM 9639 / NBRC 100938) protein is Small ribosomal subunit protein eS27.